The primary structure comprises 1060 residues: Outer capsid protein VP2 (1060 aa).

The protein belongs to the orbivirus VP2 family.

The protein localises to the virion. Functionally, the VP2 protein is one of the two proteins (with VP5) which constitute the virus particle outer capsid. It is the major target of the host immunogenic response. The polypeptide is Outer capsid protein VP2 (Segment-2) (Camelus dromedarius (Dromedary)).